A 239-amino-acid polypeptide reads, in one-letter code: MKITILSLFPSIITPFFENSIMKKVVDRGIISYEVISIRDFSDDKHKRCDDIPYGGGAGMVLKAPPISAALEYVNAKSKTTIFVSPSGLKYTQKLAYDLSKKSELVIICGRYEGLDQRVIDLYVDLEVSVGDYVLSSGEVAALVIIDSVYRLLDGAINPSSLLEESFSFDCGLLEYPHYTRPYEFKGLEVPDVLLSGHHEEIKKWRFIKSVEKTKKNRYDLYLKYLEMIGENDGFSKKN.

Residues Gly-110 and 130-135 contribute to the S-adenosyl-L-methionine site; that span reads VGDYVL.

The protein belongs to the RNA methyltransferase TrmD family. Homodimer.

Its subcellular location is the cytoplasm. The catalysed reaction is guanosine(37) in tRNA + S-adenosyl-L-methionine = N(1)-methylguanosine(37) in tRNA + S-adenosyl-L-homocysteine + H(+). Functionally, specifically methylates guanosine-37 in various tRNAs. This is tRNA (guanine-N(1)-)-methyltransferase from Borrelia hermsii (strain HS1 / DAH).